The following is a 670-amino-acid chain: MSLADLTKTNIDEQFSSVALENNRRSAECKRSPGTGDFSRNSNASAKSVDYSRSQCSCGSLSSQYDYSEDFLCDCSEKAINRNYLKQPVVKEKEKKKYNVSKISQSKGQKEISVGKKHTWNASLFNSQIHMIAQRRDAMAHRILSARLHKIKGLKNELADMHHKLEAILTENQFLKQLQLRHLKAIGKYENSQNNLPQIMAKHQNEVKNLRQLLRKSQEKERTVSRKLRETDSQLLKTKDTLQALQKLSEDKNLAEREELTHKLSIITTKMEANDKKIQSLEKQLRLNSRAFSRQLAIETRKTLAAQTATKTLQVEVKHLQQKLKEKDRELEIKNIYSHRILKNLHDTEDYPKVSSTKSVQADRKSLPFTSMRHQGTQKSDVAPLTTKGKKATGNMDRKEKSTEINREIPHCVNKLPKQEDSKTKYEDLSREEKHLEVQVLLENTGRQKDKKEDQEKKTIFVKEEQELPPKIIEVIHPERESTQEDVLVREKFKRSMQRNGMDDTPDKCTAPYTKGPLRQRRHYSFTEATENLHHGLPASGGPANAGNTKYSHSTSKHLSNREEMELEHSDSGYEPSFGKSSRIKAKDTTFRDKKSSLMEELFGSGYVLKTDQSSPGVAKGSEEPLQSKESHPLPPSQASASNAFGDSKVTVVNSIKPSSPTEGKRKIII.

The interval R24–A44 is disordered. Coiled coils occupy residues L148 to E259 and A305 to I336. Residues Y351–S402 are disordered. Over residues P368–S380 the composition is skewed to polar residues. A coiled-coil region spans residues E420–V440. Disordered stretches follow at residues R495–Q520, L533–K594, and G606–D647. Residues A546 to H558 are compositionally biased toward polar residues. 3 stretches are compositionally biased toward basic and acidic residues: residues S560–S572, K585–K594, and G621–H632. A compositionally biased stretch (polar residues) spans S637 to D647.

Belongs to the LCA5 family.

The chain is Lebercilin-like protein from Papio anubis (Olive baboon).